The primary structure comprises 90 residues: MKAGIHPDYRTVLFHDTAADVFFLIGSTADSDRTHVHSDGNTYPYIPLDVSSASHPIYTGQQRKTQVEGRIAGFNKRFASFGSGAKKAEE.

It belongs to the bacterial ribosomal protein bL31 family. Type B subfamily. Part of the 50S ribosomal subunit.

The chain is Large ribosomal subunit protein bL31B from Pseudomonas fluorescens (strain SBW25).